A 691-amino-acid polypeptide reads, in one-letter code: DNA ligase (691 aa).

NAD(+) contacts are provided by residues 41–45, 90–91, and Glu-130; these read DAEYD and SL. Lys-132 functions as the N6-AMP-lysine intermediate in the catalytic mechanism. NAD(+) contacts are provided by Arg-153, Glu-190, Lys-307, and Lys-331. Zn(2+) is bound by residues Cys-425, Cys-428, Cys-443, and Cys-449. Residues 610–691 form the BRCT domain; it reads APQGVLAGKT…MHTLLEGHAR (82 aa).

Belongs to the NAD-dependent DNA ligase family. LigA subfamily. It depends on Mg(2+) as a cofactor. Mn(2+) is required as a cofactor.

The catalysed reaction is NAD(+) + (deoxyribonucleotide)n-3'-hydroxyl + 5'-phospho-(deoxyribonucleotide)m = (deoxyribonucleotide)n+m + AMP + beta-nicotinamide D-nucleotide.. In terms of biological role, DNA ligase that catalyzes the formation of phosphodiester linkages between 5'-phosphoryl and 3'-hydroxyl groups in double-stranded DNA using NAD as a coenzyme and as the energy source for the reaction. It is essential for DNA replication and repair of damaged DNA. This Burkholderia pseudomallei (strain 1106a) protein is DNA ligase.